The chain runs to 496 residues: Nectin 1a (496 aa).

An N-terminal signal peptide occupies residues Met1 to Gly20. Topologically, residues Gln21–Val349 are extracellular. The 105-residue stretch at Gly34–Thr138 folds into the Ig-like V-type domain. A disulfide bridge links Cys41 with Cys121. Asn62 and Asn136 each carry an N-linked (GlcNAc...) asparagine glycan. Ig-like C2-type domains lie at Pro143 to Asn238 and Pro243 to Thr330. Intrachain disulfides connect Cys168/Cys222 and Cys265/Cys312. Asn282 is a glycosylation site (N-linked (GlcNAc...) asparagine). The helical transmembrane segment at Ile350 to Phe370 threads the bilayer. Over Leu371–Val496 the chain is Cytoplasmic.

It belongs to the nectin family. As to quaternary structure, cis- and trans-homodimer. Can form trans-heterodimers. Expressed in the developing eye and nervous system.

The protein resides in the cell membrane. It localises to the cell junction. Its subcellular location is the adherens junction. In terms of biological role, cell adhesion molecule that promotes cell-cell contacts and plays important roles in the development of the nervous system. Acts by forming homophilic or heterophilic trans-dimers. The protein is Nectin 1a of Danio rerio (Zebrafish).